The primary structure comprises 47 residues: Large ribosomal subunit protein bL34 (47 aa).

The protein belongs to the bacterial ribosomal protein bL34 family.

This is Large ribosomal subunit protein bL34 from Mycobacteroides abscessus (strain ATCC 19977 / DSM 44196 / CCUG 20993 / CIP 104536 / JCM 13569 / NCTC 13031 / TMC 1543 / L948) (Mycobacterium abscessus).